The following is a 328-amino-acid chain: 4-hydroxythreonine-4-phosphate dehydrogenase (328 aa).

Residues His-130 and Thr-131 each coordinate substrate. His-163, His-208, and His-263 together coordinate a divalent metal cation. Substrate contacts are provided by Lys-271, Asn-280, and Arg-289.

Belongs to the PdxA family. As to quaternary structure, homodimer. Requires Zn(2+) as cofactor. The cofactor is Mg(2+). Co(2+) is required as a cofactor.

It is found in the cytoplasm. It catalyses the reaction 4-(phosphooxy)-L-threonine + NAD(+) = 3-amino-2-oxopropyl phosphate + CO2 + NADH. It participates in cofactor biosynthesis; pyridoxine 5'-phosphate biosynthesis; pyridoxine 5'-phosphate from D-erythrose 4-phosphate: step 4/5. In terms of biological role, catalyzes the NAD(P)-dependent oxidation of 4-(phosphooxy)-L-threonine (HTP) into 2-amino-3-oxo-4-(phosphooxy)butyric acid which spontaneously decarboxylates to form 3-amino-2-oxopropyl phosphate (AHAP). In Burkholderia vietnamiensis (strain G4 / LMG 22486) (Burkholderia cepacia (strain R1808)), this protein is 4-hydroxythreonine-4-phosphate dehydrogenase.